Reading from the N-terminus, the 194-residue chain is Early E3 22.1 kDa glycoprotein (194 aa).

6 N-linked (GlcNAc...) asparagine; by host glycosylation sites follow: asparagine 19, asparagine 60, asparagine 75, asparagine 87, asparagine 125, and asparagine 138.

The polypeptide is Early E3 22.1 kDa glycoprotein (Canine adenovirus serotype 1 (strain RI261) (CAdV-1)).